Here is a 164-residue protein sequence, read N- to C-terminus: Interferon gamma (164 aa).

The N-terminal stretch at 1-19 is a signal peptide; it reads MTCQTYCLFVLSVIMIYFG. N-linked (GlcNAc...) asparagine glycans are attached at residues Asn42, Asn61, and Asn95.

It belongs to the type II (or gamma) interferon family. As to quaternary structure, homodimer.

It localises to the secreted. Its function is as follows. Produced by lymphocytes activated by specific antigens or mitogens. IFN-gamma, in addition to having antiviral activity, has important immunoregulatory functions. It is a potent activator of macrophages, it has antiproliferative effects on transformed cells and it can potentiate the antiviral and antitumor effects of the type I interferons. The polypeptide is Interferon gamma (IFNG) (Anas platyrhynchos (Mallard)).